The chain runs to 326 residues: Eukaryotic translation initiation factor 3 subunit I (326 aa).

WD repeat units lie at residues 8-47 (GHER…RLGT), 50-89 (GHQG…VIAS), 145-184 (MTES…KVVD), 188-227 (DHSA…CLKT), and 285-326 (GHFG…NIFE).

Belongs to the eIF-3 subunit I family. Component of the eukaryotic translation initiation factor 3 (eIF-3) complex. The eIF-3 complex interacts with pix.

It is found in the cytoplasm. Functionally, component of the eukaryotic translation initiation factor 3 (eIF-3) complex, which is involved in protein synthesis of a specialized repertoire of mRNAs and, together with other initiation factors, stimulates binding of mRNA and methionyl-tRNAi to the 40S ribosome. The eIF-3 complex specifically targets and initiates translation of a subset of mRNAs involved in cell proliferation. The polypeptide is Eukaryotic translation initiation factor 3 subunit I (Drosophila sechellia (Fruit fly)).